A 171-amino-acid polypeptide reads, in one-letter code: Ribosome maturation factor RimM (171 aa).

Residues 96–170 form the PRC barrel domain; that stretch reads AEGEYYYHEI…LVTIHVMEGL (75 aa).

Belongs to the RimM family. Binds ribosomal protein uS19.

It localises to the cytoplasm. Functionally, an accessory protein needed during the final step in the assembly of 30S ribosomal subunit, possibly for assembly of the head region. Essential for efficient processing of 16S rRNA. May be needed both before and after RbfA during the maturation of 16S rRNA. It has affinity for free ribosomal 30S subunits but not for 70S ribosomes. The polypeptide is Ribosome maturation factor RimM (Bacillus mycoides (strain KBAB4) (Bacillus weihenstephanensis)).